A 66-amino-acid chain; its full sequence is Large ribosomal subunit protein uL29 (66 aa).

The protein belongs to the universal ribosomal protein uL29 family.

The chain is Large ribosomal subunit protein uL29 from Helicobacter pylori (strain Shi470).